Reading from the N-terminus, the 480-residue chain is Caspase-8 (480 aa).

A propeptide spanning residues 1 to 218 (MDFQSCLYAI…ELCDSPREQD (218 aa)) is cleaved from the precursor. 2 consecutive DED domains span residues 3–80 (FQSC…NFLD) and 101–177 (YRVM…KIED). Phosphoserine is present on residues Ser188 and Ser213. Lys226 carries the N6-acetyllysine modification. His319 is a catalytic residue. At Tyr336 the chain carries Phosphotyrosine. Cys362 is an active-site residue. Positions 377–387 (FEQQNHTLEVD) are excised as a propeptide. A Phosphoserine; by CDK1 modification is found at Ser389.

The protein belongs to the peptidase C14A family. In terms of assembly, heterotetramer that consists of two anti-parallel arranged heterodimers, each one formed by a 18 kDa (p18) and a 10 kDa (p10) subunit. Component of the death-induced signaling complex (DISC) composed of cell surface receptor FAS/CD95 or TNFRSF1A, adapter protein FADD and the CASP8 protease; recruitment of CASP8 to the complex is required for processing of CASP8 into the p18 and p10 subunits. Component of the AIM2 PANoptosome complex, a multiprotein complex that drives inflammatory cell death (PANoptosis). Interacts with CFLAR and PEA15. Interacts with RFFL and RNF34; negatively regulate CASP8 through proteasomal degradation. Interacts with TNFAIP8L2. Interacts with CASP8AP2. Interacts with NOL3; decreases CASP8 activity in a mitochondria localization- and phosphorylation-dependent manner and this interaction is dissociated by calcium. Interacts with UBR2. Interacts with RIPK1. Interacts with stimulated TNFRSF10B; this interaction is followed by CASP8 proteolytic cleavage and activation. Post-translationally, generation of the subunits requires association with the death-inducing signaling complex (DISC), whereas additional processing is likely due to the autocatalytic activity of the activated protease. GZMB and CASP10 can be involved in these processing events. (Microbial infection) Proteolytically cleaved by the cowpox virus CRMA death inhibitory protein. In terms of processing, phosphorylation on Ser-389 during mitosis by CDK1 inhibits activation by proteolysis and prevents apoptosis. This phosphorylation occurs in cancer cell lines, as well as in primary breast tissues and lymphocytes. In terms of tissue distribution, expressed in a wide variety of tissues. Highest expression in spleen, thymus, lung, liver and kidney. Lower expression in heart, brain, testis and skeletal muscle.

The protein resides in the cytoplasm. Its subcellular location is the nucleus. The catalysed reaction is Strict requirement for Asp at position P1 and has a preferred cleavage sequence of (Leu/Asp/Val)-Glu-Thr-Asp-|-(Gly/Ser/Ala).. Its activity is regulated as follows. CASP8 activity is restricted by RIPK1. With respect to regulation, (Microbial infection) Inhibited by baculovirus p35 protein P35. Its function is as follows. Thiol protease that plays a key role in programmed cell death by acting as a molecular switch for apoptosis, necroptosis and pyroptosis, and is required to prevent tissue damage during embryonic development and adulthood. Initiator protease that induces extrinsic apoptosis by mediating cleavage and activation of effector caspases responsible for FAS/CD95-mediated and TNFRSF1A-induced cell death. Cleaves and activates effector caspases CASP3, CASP4, CASP6, CASP7, CASP9 and CASP10. Binding to the adapter molecule FADD recruits it to either receptor FAS/CD95 or TNFRSF1A. The resulting aggregate called the death-inducing signaling complex (DISC) performs CASP8 proteolytic activation. The active dimeric enzyme is then liberated from the DISC and free to activate downstream apoptotic proteases. Proteolytic fragments of the N-terminal propeptide (termed CAP3, CAP5 and CAP6) are likely retained in the DISC. In addition to extrinsic apoptosis, also acts as a negative regulator of necroptosis: acts by cleaving RIPK1 at 'Asp-325', which is crucial to inhibit RIPK1 kinase activity, limiting TNF-induced apoptosis, necroptosis and inflammatory response. Also able to initiate pyroptosis by mediating cleavage and activation of gasdermin-C and -D (GSDMC and GSDMD, respectively): gasdermin cleavage promotes release of the N-terminal moiety that binds to membranes and forms pores, triggering pyroptosis. Initiates pyroptosis following inactivation of MAP3K7/TAK1. Also acts as a regulator of innate immunity by mediating cleavage and inactivation of N4BP1 downstream of TLR3 or TLR4, thereby promoting cytokine production. May participate in the Granzyme B (GZMB) cell death pathways. Cleaves PARP1 and PARP2. The chain is Caspase-8 from Mus musculus (Mouse).